The chain runs to 336 residues: Non-structural maintenance of chromosomes element 1 (336 aa).

An RING-type; atypical zinc finger spans residues 268-327 (LNTCQNCHKLAIQGVRCGNESCREENEETGENSLSQIWHVDCFKHYITHVSKNCDRCGSS).

It belongs to the NSE1 family. Component of the Smc5-Smc6 complex which consists of KRE29, MMS21, NSE1, NSE3, NSE4, NSE5, SMC5 and SMC6. Interacts with SMC5 and SMC6. Interacts with NSE3.

Its subcellular location is the nucleus. The enzyme catalyses S-ubiquitinyl-[E2 ubiquitin-conjugating enzyme]-L-cysteine + [acceptor protein]-L-lysine = [E2 ubiquitin-conjugating enzyme]-L-cysteine + N(6)-ubiquitinyl-[acceptor protein]-L-lysine.. Functionally, acts in a DNA repair pathway for removal of UV-induced DNA damage that is distinct from classical nucleotide excision repair and in repair of ionizing radiation damage. Functions in homologous recombination repair of DNA double strand breaks and in recovery of stalled replication forks. This chain is Non-structural maintenance of chromosomes element 1 (NSE1), found in Saccharomyces cerevisiae (strain ATCC 204508 / S288c) (Baker's yeast).